The chain runs to 509 residues: Maturase K (509 aa).

The protein belongs to the intron maturase 2 family. MatK subfamily.

The protein resides in the plastid. The protein localises to the chloroplast. Functionally, usually encoded in the trnK tRNA gene intron. Probably assists in splicing its own and other chloroplast group II introns. The sequence is that of Maturase K from Amentotaxus argotaenia (Chinese flowering yew).